A 156-amino-acid chain; its full sequence is MSRRNAPKKRPISSDPIYRSRLVSMVISHILKNGKKSLAHRILYQAMKNIEEKTEKDPLKILQQAVLNATPLVEVKARRIGGSTYQVPREVKPERGTALALRWLLSSARKRPGRDMASKLTNELLDAANEVGNAIRKREETHRMAEANKAFSHYRF.

Belongs to the universal ribosomal protein uS7 family. As to quaternary structure, part of the 30S ribosomal subunit.

The protein localises to the plastid. It localises to the chloroplast. Functionally, one of the primary rRNA binding proteins, it binds directly to 16S rRNA where it nucleates assembly of the head domain of the 30S subunit. The protein is Small ribosomal subunit protein uS7c (rps7) of Chlorokybus atmophyticus (Soil alga).